Here is a 1161-residue protein sequence, read N- to C-terminus: MLRRVAVAAVCVTGRKLRCEAGRELTALGRIEARGLCEESSKPFPTLTMPGRNKAKSTCSCPDLQPNGQDLGESGRLARLGADESEEEGRSFSNVGDPEIIKSPSDPKQYRYIKLQNGLQALLISDLSNVEGKTGNATDEEEEEEEEEEEEDDDDDDDDDDDDEDSGAEIQDDDEEGFDDEEEFDDDDDDEHDDDDLENEENELEELEERVEARKKTTEKQSAAALCVGVGSFADPDDLPGLAHFLEHMVFMGSLKYPDENGFDAFLKKHGGSDNASTDCERTVFQFDVQRKYFKEALDRWAQFFIHPLMIRDAIDREVEAVDSEYQLARPSDANRKEMLFGSLARPGHPMGKFFWGNAETLKHEPKKNNIDTHARLREFWMRYYSAHYMTLVVQSKETLDTLEKWVTEIFSQIPNNGLPKPNFSHLTDPFDTPAFNKLYRVVPIRKIHALTITWALPPQQQHYRVKPLHYISWLVGHEGKGSILSYLRKKCWALALFGGNGETGFEQNSTYSVFSISITLTDEGYEHFYEVAHTVFQYLKMLQKLGPEKRVFEEIQKIEDNEFHYQEQTDPVEYVENMCENMQLYPRQDFLTGDQLLFEYKPEVIAEALNQLVPQKANLVLLSGANEGRCDLKEKWFGTQYSIEDIENSWTELWKSNFDLNPDLHLPAENKYIATDFTLKAFDCPETEYPAKIVNTAQGCLWYKKDNKFKIPKAYIRFHLISPLIQKSAANVVLFDIFVNILTHNLAEPAYEADVAQLEYKLVAGEHGLIIRVKGFNHKLPLLFQLIIDYLTEFSSTPAVFTMITEQLKKTYFNILIKPETLAKDVRLLILEYSRWSMIDKYQALMDGLSLDSLLNFVKDFKSQLFVEGLVQGNVTSTESMDFLKYVVDKLNFAPLEREMPVQFQVVELPSGHHLCKVRALNKGDANSEVTVYYQSGTRSLREYTLMELLVMHMEEPCFDFLRTKQTLGYHVYPTCRNTSGILGFSVTVGTQATKYNSETVDKKIEEFLSSFEEKIENLTEDAFNTQVTALIKLKECEDTHLGEEVDRNWNEVVTQQYLFDRLAHEIEALKSFSKSDLVSWFKAHRGPGSKMLSVHVVGYGKYELEEDGAPFGEDSNSREGMQLTYLPPSPVLAESTTPITDIRAFTATLSLFPYHKIVK.

Residues Met-1–Arg-18 form the signal peptide. Disordered regions lie at residues Met-49 to Ser-103 and Val-130 to Thr-218. Phosphoserine occurs at positions 85, 91, and 93. Acidic residues predominate over residues Thr-138–Glu-209. Residue His-244 coordinates Zn(2+). The Proton acceptor role is filled by Glu-247. Residues His-248 and Glu-325 each coordinate Zn(2+).

This sequence belongs to the peptidase M16 family. As to quaternary structure, interacts with BACE1 and NRG1. Zn(2+) is required as a cofactor. Highly expressed in brain of early postnatal mice but expressed at a lower level in the brains of adult mice. Expression is high in cortical neurons, and lower in neurons in the striatum. Very low expression detected in the corpus callosum. Also expressed in the gray matter in spinal cord and dorsal root ganglia.

It is found in the mitochondrion. The protein resides in the cell projection. The protein localises to the dendrite. It catalyses the reaction Hydrolysis of polypeptides, preferably at -Xaa-|-Arg-Lys-, and less commonly at -Arg-|-Arg-Xaa-, in which Xaa is not Arg or Lys.. Its function is as follows. Cleaves peptide substrates on the N-terminus of arginine residues in dibasic pairs. Is a critical activator of BACE1- and ADAM17-mediated pro-neuregulin ectodomain shedding, involved in the positive regulation of axonal maturation and myelination. Required for proper functioning of 2-oxoglutarate dehydrogenase (OGDH). This is Nardilysin from Mus musculus (Mouse).